The following is a 107-amino-acid chain: Thioredoxin 1 (107 aa).

A Thioredoxin domain is found at 2 to 107; the sequence is SAAAQVTDST…TLSQTLEKHL (106 aa). Cys32 and Cys35 are disulfide-bonded.

The protein belongs to the thioredoxin family.

Its function is as follows. Participates in various redox reactions through the reversible oxidation of its active center dithiol to a disulfide and catalyzes dithiol-disulfide exchange reactions. In Nostoc sp. (strain PCC 7120 / SAG 25.82 / UTEX 2576), this protein is Thioredoxin 1 (trxA).